A 378-amino-acid chain; its full sequence is S-adenosylmethionine synthase (378 aa).

H15 contributes to the ATP binding site. D17 is a Mg(2+) binding site. K(+) is bound at residue E43. L-methionine contacts are provided by E56 and Q99. Positions 99–109 are flexible loop; the sequence is QSPDINQGINR. ATP contacts are provided by residues 164 to 166, 230 to 231, D239, 245 to 246, A262, and K266; these read DAK, RF, and RK. L-methionine is bound at residue D239. Position 270 (K270) interacts with L-methionine.

Belongs to the AdoMet synthase family. Homotetramer; dimer of dimers. Mg(2+) serves as cofactor. Requires K(+) as cofactor.

The protein resides in the cytoplasm. The catalysed reaction is L-methionine + ATP + H2O = S-adenosyl-L-methionine + phosphate + diphosphate. The protein operates within amino-acid biosynthesis; S-adenosyl-L-methionine biosynthesis; S-adenosyl-L-methionine from L-methionine: step 1/1. Functionally, catalyzes the formation of S-adenosylmethionine (AdoMet) from methionine and ATP. The overall synthetic reaction is composed of two sequential steps, AdoMet formation and the subsequent tripolyphosphate hydrolysis which occurs prior to release of AdoMet from the enzyme. The polypeptide is S-adenosylmethionine synthase (Buchnera aphidicola subsp. Acyrthosiphon pisum (strain 5A)).